The primary structure comprises 140 residues: Probable glycine cleavage system H protein (140 aa).

The 93-residue stretch at 22–114 (RAIIGITSYA…YEEGWIVVLE (93 aa)) folds into the Lipoyl-binding domain. The residue at position 63 (lysine 63) is an N6-lipoyllysine.

Belongs to the GcvH family. As to quaternary structure, the glycine cleavage system is composed of four proteins: P, T, L and H. Requires (R)-lipoate as cofactor.

Functionally, the glycine cleavage system catalyzes the degradation of glycine. The H protein shuttles the methylamine group of glycine from the P protein to the T protein. The chain is Probable glycine cleavage system H protein from Korarchaeum cryptofilum (strain OPF8).